The chain runs to 61 residues: MAKNLKITLHHGIVNRTPAQRATVKTLGLNKIGKTVVREDTPANRGLVNAVRHLVTVEEVD.

The protein belongs to the universal ribosomal protein uL30 family. As to quaternary structure, part of the 50S ribosomal subunit.

The sequence is that of Large ribosomal subunit protein uL30 from Bifidobacterium longum (strain DJO10A).